A 154-amino-acid polypeptide reads, in one-letter code: Urease accessory protein UreE (154 aa).

It belongs to the UreE family.

The protein resides in the cytoplasm. In terms of biological role, involved in urease metallocenter assembly. Binds nickel. Probably functions as a nickel donor during metallocenter assembly. The chain is Urease accessory protein UreE from Rhizobium meliloti (strain 1021) (Ensifer meliloti).